The chain runs to 184 residues: Adenine phosphoribosyltransferase (184 aa).

It belongs to the purine/pyrimidine phosphoribosyltransferase family. As to quaternary structure, homodimer.

The protein localises to the cytoplasm. It catalyses the reaction AMP + diphosphate = 5-phospho-alpha-D-ribose 1-diphosphate + adenine. The protein operates within purine metabolism; AMP biosynthesis via salvage pathway; AMP from adenine: step 1/1. In terms of biological role, catalyzes a salvage reaction resulting in the formation of AMP, that is energically less costly than de novo synthesis. The chain is Adenine phosphoribosyltransferase from Mycobacterium marinum (strain ATCC BAA-535 / M).